The sequence spans 173 residues: Translation initiation factor IF-3 (173 aa).

This sequence belongs to the IF-3 family. As to quaternary structure, monomer.

It localises to the cytoplasm. IF-3 binds to the 30S ribosomal subunit and shifts the equilibrium between 70S ribosomes and their 50S and 30S subunits in favor of the free subunits, thus enhancing the availability of 30S subunits on which protein synthesis initiation begins. This Neisseria gonorrhoeae (strain ATCC 700825 / FA 1090) protein is Translation initiation factor IF-3.